Reading from the N-terminus, the 424-residue chain is Serine--tRNA ligase (424 aa).

Residue 230 to 232 (TAE) coordinates L-serine. 261–263 (RSE) provides a ligand contact to ATP. Glu284 serves as a coordination point for L-serine. 348 to 351 (EISS) serves as a coordination point for ATP. Position 384 (Ser384) interacts with L-serine.

This sequence belongs to the class-II aminoacyl-tRNA synthetase family. Type-1 seryl-tRNA synthetase subfamily. Homodimer. The tRNA molecule binds across the dimer.

The protein resides in the cytoplasm. It catalyses the reaction tRNA(Ser) + L-serine + ATP = L-seryl-tRNA(Ser) + AMP + diphosphate + H(+). The enzyme catalyses tRNA(Sec) + L-serine + ATP = L-seryl-tRNA(Sec) + AMP + diphosphate + H(+). The protein operates within aminoacyl-tRNA biosynthesis; selenocysteinyl-tRNA(Sec) biosynthesis; L-seryl-tRNA(Sec) from L-serine and tRNA(Sec): step 1/1. Functionally, catalyzes the attachment of serine to tRNA(Ser). Is also able to aminoacylate tRNA(Sec) with serine, to form the misacylated tRNA L-seryl-tRNA(Sec), which will be further converted into selenocysteinyl-tRNA(Sec). This is Serine--tRNA ligase from Streptococcus pneumoniae serotype 19F (strain G54).